The following is a 130-amino-acid chain: Small ribosomal subunit protein uS8 (130 aa).

This sequence belongs to the universal ribosomal protein uS8 family. As to quaternary structure, part of the 30S ribosomal subunit. Contacts proteins S5 and S12.

One of the primary rRNA binding proteins, it binds directly to 16S rRNA central domain where it helps coordinate assembly of the platform of the 30S subunit. The protein is Small ribosomal subunit protein uS8 of Yersinia pseudotuberculosis serotype O:1b (strain IP 31758).